A 661-amino-acid chain; its full sequence is tRNA uridine 5-carboxymethylaminomethyl modification enzyme MnmG (661 aa).

FAD-binding positions include G16 to G21, V128, and S183. The tract at residues P206–F230 is disordered. Positions S216 to F230 are enriched in basic and acidic residues. G277–F291 provides a ligand contact to NAD(+). Q374 contacts FAD.

It belongs to the MnmG family. Homodimer. Heterotetramer of two MnmE and two MnmG subunits. It depends on FAD as a cofactor.

The protein localises to the cytoplasm. Its function is as follows. NAD-binding protein involved in the addition of a carboxymethylaminomethyl (cmnm) group at the wobble position (U34) of certain tRNAs, forming tRNA-cmnm(5)s(2)U34. This chain is tRNA uridine 5-carboxymethylaminomethyl modification enzyme MnmG, found in Lactobacillus helveticus (strain DPC 4571).